The primary structure comprises 192 residues: Phosphoheptose isomerase (192 aa).

Residues leucine 37–lysine 192 enclose the SIS domain. Asparagine 52–glycine 54 serves as a coordination point for substrate. 2 residues coordinate Zn(2+): histidine 61 and glutamate 65. Substrate-binding positions include glutamate 65, asparagine 93–aspartate 94, serine 119–serine 121, serine 124, and glutamine 172. Zn(2+)-binding residues include glutamine 172 and histidine 180.

This sequence belongs to the SIS family. GmhA subfamily. In terms of assembly, homotetramer. Zn(2+) is required as a cofactor.

It is found in the cytoplasm. The catalysed reaction is 2 D-sedoheptulose 7-phosphate = D-glycero-alpha-D-manno-heptose 7-phosphate + D-glycero-beta-D-manno-heptose 7-phosphate. Its pathway is carbohydrate biosynthesis; D-glycero-D-manno-heptose 7-phosphate biosynthesis; D-glycero-alpha-D-manno-heptose 7-phosphate and D-glycero-beta-D-manno-heptose 7-phosphate from sedoheptulose 7-phosphate: step 1/1. Functionally, catalyzes the isomerization of sedoheptulose 7-phosphate in D-glycero-D-manno-heptose 7-phosphate. This is Phosphoheptose isomerase from Enterobacter sp. (strain 638).